A 288-amino-acid polypeptide reads, in one-letter code: Pantothenate synthetase (288 aa).

Methionine 30–histidine 37 contributes to the ATP binding site. The active-site Proton donor is histidine 37. Glutamine 61 contacts (R)-pantoate. Position 61 (glutamine 61) interacts with beta-alanine. Glycine 148–aspartate 151 serves as a coordination point for ATP. Glutamine 154 provides a ligand contact to (R)-pantoate. Residues valine 177 and leucine 185 to arginine 188 contribute to the ATP site.

This sequence belongs to the pantothenate synthetase family. In terms of assembly, homodimer.

The protein resides in the cytoplasm. It carries out the reaction (R)-pantoate + beta-alanine + ATP = (R)-pantothenate + AMP + diphosphate + H(+). It participates in cofactor biosynthesis; (R)-pantothenate biosynthesis; (R)-pantothenate from (R)-pantoate and beta-alanine: step 1/1. Catalyzes the condensation of pantoate with beta-alanine in an ATP-dependent reaction via a pantoyl-adenylate intermediate. The chain is Pantothenate synthetase from Psychrobacter arcticus (strain DSM 17307 / VKM B-2377 / 273-4).